The following is a 266-amino-acid chain: Methionine aminopeptidase (266 aa).

Histidine 80 is a binding site for substrate. A divalent metal cation contacts are provided by aspartate 98, aspartate 109, and histidine 172. Histidine 179 provides a ligand contact to substrate. Residues glutamate 206 and glutamate 237 each coordinate a divalent metal cation.

The protein belongs to the peptidase M24A family. Methionine aminopeptidase type 1 subfamily. Monomer. It depends on Co(2+) as a cofactor. Zn(2+) serves as cofactor. Requires Mn(2+) as cofactor. The cofactor is Fe(2+).

It catalyses the reaction Release of N-terminal amino acids, preferentially methionine, from peptides and arylamides.. Functionally, removes the N-terminal methionine from nascent proteins. The N-terminal methionine is often cleaved when the second residue in the primary sequence is small and uncharged (Met-Ala-, Cys, Gly, Pro, Ser, Thr, or Val). Requires deformylation of the N(alpha)-formylated initiator methionine before it can be hydrolyzed. The protein is Methionine aminopeptidase of Buchnera aphidicola subsp. Baizongia pistaciae (strain Bp).